The primary structure comprises 384 residues: Histidinol-phosphate aminotransferase (384 aa).

Lysine 223 carries the N6-(pyridoxal phosphate)lysine modification.

The protein belongs to the class-II pyridoxal-phosphate-dependent aminotransferase family. Requires pyridoxal 5'-phosphate as cofactor.

The enzyme catalyses L-histidinol phosphate + 2-oxoglutarate = 3-(imidazol-4-yl)-2-oxopropyl phosphate + L-glutamate. The protein operates within amino-acid biosynthesis; L-histidine biosynthesis; L-histidine from 5-phospho-alpha-D-ribose 1-diphosphate: step 7/9. The polypeptide is Histidinol-phosphate aminotransferase (his3) (Schizosaccharomyces pombe (strain 972 / ATCC 24843) (Fission yeast)).